We begin with the raw amino-acid sequence, 502 residues long: Lysine--tRNA ligase (502 aa).

Residues glutamate 412 and glutamate 419 each coordinate Mg(2+).

It belongs to the class-II aminoacyl-tRNA synthetase family. Homodimer. The cofactor is Mg(2+).

It is found in the cytoplasm. The enzyme catalyses tRNA(Lys) + L-lysine + ATP = L-lysyl-tRNA(Lys) + AMP + diphosphate. In Histophilus somni (strain 2336) (Haemophilus somnus), this protein is Lysine--tRNA ligase.